Reading from the N-terminus, the 50-residue chain is Mating-type pheromone BAP1(1) (50 aa).

Residues 1-32 (MDGEGHDINIWGARMSPSPAAAPVSATRGAPW) are disordered. A compositionally biased stretch (low complexity) spans 16 to 26 (SPSPAAAPVSA). Cysteine 47 is modified (cysteine methyl ester). Cysteine 47 is lipidated: S-farnesyl cysteine. Positions 48 to 50 (VCH) are cleaved as a propeptide — removed in mature form.

It localises to the cell membrane. Activates B-regulated development. The polypeptide is Mating-type pheromone BAP1(1) (BAP1(1)) (Schizophyllum commune (Split gill fungus)).